Here is a 127-residue protein sequence, read N- to C-terminus: Small ribosomal subunit protein uS11 (127 aa).

It belongs to the universal ribosomal protein uS11 family. As to quaternary structure, part of the 30S ribosomal subunit. Interacts with proteins S7 and S18. Binds to IF-3.

Located on the platform of the 30S subunit, it bridges several disparate RNA helices of the 16S rRNA. Forms part of the Shine-Dalgarno cleft in the 70S ribosome. This chain is Small ribosomal subunit protein uS11, found in Nitrosococcus oceani (strain ATCC 19707 / BCRC 17464 / JCM 30415 / NCIMB 11848 / C-107).